Reading from the N-terminus, the 606-residue chain is Polyphenol oxidase A1, chloroplastic (606 aa).

A chloroplast-targeting transit peptide spans Met-1–Ala-92. The tract at residues Lys-32–Leu-63 is disordered. Over residues Gln-35–Arg-44 the composition is skewed to basic residues. Cystine bridges form between Cys-103–Cys-121 and Cys-120–Cys-182. Positions 181, 202, 211, 333, 337, and 367 each coordinate Cu cation. Positions Cys-185–His-202 form a cross-link, 2'-(S-cysteinyl)-histidine (Cys-His).

This sequence belongs to the tyrosinase family. Requires Cu(2+) as cofactor.

The protein localises to the plastid. It is found in the chloroplast thylakoid lumen. The catalysed reaction is 2 catechol + O2 = 2 1,2-benzoquinone + 2 H2O. Functionally, catalyzes the oxidation of mono- and o-diphenols to o-diquinones. The chain is Polyphenol oxidase A1, chloroplastic from Vicia faba (Broad bean).